A 347-amino-acid polypeptide reads, in one-letter code: MPSMTKRKFKEELLQALAPEIYGPSDNLTKRDIKHVKKREKKEEEVAAASADGVEFVRSFAPRRRVQWKGRQVKRILRPGTTVVFSPGERTIMRPLKREYDEVYADDDILEQAAQQTGEFAYGKKGRYGDKIAIPLDEGNPTPSLKAVTLQQVLPVLGPSEEKRGIKREAMDELQPTMQLMVPKRQKLEDVLEHMKVDPSVQPDVKVRPIKKVAPGLGVQTVDIQIPVQTALGETMEIQTSPIKTTVNASVQTDPWYPPVLSTKKKRHYRQTSSLLPDYVLHPSIVPTPGYRGTTFQRRATAPSRRRGPSRRRRRRKATLAPAAVRRVVQRGRTLILPSVRYHPSIL.

Residues 290-320 (GYRGTTFQRRATAPSRRRGPSRRRRRRKATL) form a disordered region. Residues 304–318 (SRRRGPSRRRRRRKA) show a composition bias toward basic residues.

Belongs to the adenoviridae core-capsid bridging protein family. As to quaternary structure, monomer. Homodimer. Exists in equilibrium between monomers and dimers in solution. Interacts with the histone-like nucleoprotein; this interactions bridge the virus core to the capsid. Interacts with core protein X; this interactions bridge the virus core to the capsid. Interacts with the endosome lysis protein VI; this interactions bridge the virus core to the capsid. Interacts with the peripentonal hexons. Interacts with host NPM1; this interaction might play a role in virus assembly.

It is found in the virion. The protein resides in the host nucleus. It localises to the host nucleolus. Associates loosely with the viral DNA to form an outer shell around the nucleoprotein-DNA complex and links it with the capsid by binding the endosome lysis protein. Dissociates from the viral genome during entry. Might be involved in nuclear capsid assembly of the viral particles through its association with NPM1/nucleophosmin. In Homo sapiens (Human), this protein is Core-capsid bridging protein.